The chain runs to 451 residues: Plasmepsin III (451 aa).

Topologically, residues 1-37 (MNLTIKEEDFTNTFMKNEESFNTFRVTKVKRWNAKRL) are cytoplasmic. The propeptide occupies 1–123 (MNLTIKEEDF…KGLTKKSYLG (123 aa)). The helical; Signal-anchor for type II membrane protein transmembrane segment at 38 to 58 (FKILFVTVFIVLAGGFSYYIF) threads the bilayer. Topologically, residues 59–451 (ENFVFQKNRK…TVGFALAKNL (393 aa)) are lumenal. The 308-residue stretch at 139 to 446 (SFGEAKLGDN…DYDNHTVGFA (308 aa)) folds into the Peptidase A1 domain. 2 disulfides stabilise this stretch: cysteine 170–cysteine 175 and cysteine 372–cysteine 408.

Belongs to the peptidase A1 family. As to quaternary structure, probable homodimer; in the zymogen form. Monomer; in the active form. Acidification disrupts homodimerization. Component of the hemozoin formation complex (HFC) composed of falcipains FP2A and/or FP2B, plasmepsins PMII, PMIII/HAP and PMIV, heme detoxifying protein HDP and falcilysin FLN. The HFC complex is involved in hemoglobin degradation and detoxification of heme in the food vacuole during the asexual blood stage. In terms of processing, proteolytically cleaved into the soluble active mature form by cysteine proteases in the digestive vacuole of trophozoites. Proteolysis requires an acidic environment. Transprocessing may serve as an alternate activation system.

Its subcellular location is the membrane. It is found in the vacuole lumen. It carries out the reaction Hydrolysis of the bonds linking certain hydrophobic residues in hemoglobin or globin. Also cleaves small molecules substrates such as Ala-Leu-Glu-Arg-Thr-Phe-|-Phe(NO2)-Ser-Phe-Pro-Thr.. With respect to regulation, dimerization causes loss of catalytic activity. Inhibited by pepstatin A. Inhibited by Zn(2+). In terms of biological role, during the asexual blood stage, catalyzes the cleavage of denatured host hemoglobin (Hb) or globins. Digestion of host Hb is an essential step which provides the parasite with amino acids for protein synthesis, and regulates osmolarity. The protein is Plasmepsin III of Plasmodium falciparum (isolate 3D7).